Consider the following 501-residue polypeptide: 2-phosphoxylose phosphatase 1 (501 aa).

Topologically, residues 1–6 (MLLRNR) are cytoplasmic. The helical; Signal-anchor for type II membrane protein transmembrane segment at 7 to 27 (FLLLLALAGLLAFLSLSLQFF) threads the bilayer. The Lumenal portion of the chain corresponds to 28–501 (SRWLPVSLQL…YYDACHQRLF (474 aa)). Residue H120 is the Nucleophile of the active site. N-linked (GlcNAc...) asparagine glycans are attached at residues N328 and N377. The active-site Proton donor is the D402. N-linked (GlcNAc...) asparagine glycosylation occurs at N488.

It belongs to the histidine acid phosphatase family.

The protein localises to the golgi apparatus membrane. It carries out the reaction 3-O-[beta-D-GlcA-(1-&gt;3)-beta-D-Gal-(1-&gt;3)-beta-D-Gal-(1-&gt;4)-beta-D-2-O-P-Xyl]-L-seryl-[protein] + H2O = 3-O-(beta-D-GlcA-(1-&gt;3)-beta-D-Gal-(1-&gt;3)-beta-D-Gal-(1-&gt;4)-beta-D-Xyl)-L-seryl-[protein] + phosphate. In terms of biological role, responsible for the 2-O-dephosphorylation of xylose in the glycosaminoglycan-protein linkage region of proteoglycans thereby regulating the amount of mature glycosaminoglycan (GAG) chains. Sulfated glycosaminoglycans (GAGs), including heparan sulfate and chondroitin sulfate, are synthesized on the so-called common GAG-protein linkage region (GlcUAbeta1-3Galbeta1-3Galbeta1-4Xylbeta1-O-Ser) of core proteins, which is formed by the stepwise addition of monosaccharide residues by the respective specific glycosyltransferases. Xylose 2-O-dephosphorylation during completion of linkage region formation is a prerequisite for the initiation and efficient elongation of the repeating disaccharide region of GAG chains. The protein is 2-phosphoxylose phosphatase 1 of Xenopus tropicalis (Western clawed frog).